Reading from the N-terminus, the 359-residue chain is Lipopolysaccharide 1,6-galactosyltransferase (359 aa).

Positions 244 and 276 each coordinate UDP.

Belongs to the glycosyltransferase group 1 family. Glycosyltransferase 4 subfamily.

It catalyses the reaction alpha-D-Glc-(1-&gt;3)-[L-alpha-D-Hep-(1-&gt;7)]-4-O-PO3(2-)-L-alpha-D-Hep-(1-&gt;3)-4-O-PO3(2-)-L-alpha-D-Hep-(1-&gt;5)-[alpha-Kdo-(2-&gt;4)]-alpha-Kdo-(2-&gt;6)-lipid A + UDP-alpha-D-galactose = alpha-D-Gal-(1-&gt;6)-alpha-D-Glc-(1-&gt;3)-[L-alpha-D-Hep-(1-&gt;7)]-4-O-PO3(2-)-L-alpha-D-Hep-(1-&gt;3)-4-O-PO3(2-)-L-alpha-D-Hep-(1-&gt;5)-[alpha-Kdo-(2-&gt;4)]-alpha-Kdo-(2-&gt;6)-lipid A + UDP + H(+). It participates in bacterial outer membrane biogenesis; LPS core biosynthesis. In terms of biological role, galactosyltransferase involved in the biosynthesis of the core oligosaccharide region of lipopolysaccharide (LPS). Catalyzes the addition of galactose from UDP-galactose to the first glucose residue of the LPS outer core. The polypeptide is Lipopolysaccharide 1,6-galactosyltransferase (Salmonella typhimurium (strain LT2 / SGSC1412 / ATCC 700720)).